We begin with the raw amino-acid sequence, 1117 residues long: A disintegrin and metalloproteinase with thrombospondin motifs 6 (1117 aa).

Residues 1–21 form the signal peptide; sequence MEILWKTLTWILSLIMASSEF. The propeptide occupies 22-244; that stretch reads HSDHRLSYSS…NTHIHHRQKR (223 aa). 4 N-linked (GlcNAc...) asparagine glycosylation sites follow: Asn99, Asn172, Asn222, and Asn234. Residues 250 to 468 form the Peptidase M12B domain; the sequence is RFVETLVVAD…GRGTCLDNEP (219 aa). Disulfide bonds link Cys326–Cys387, Cys362–Cys369, Cys381–Cys463, Cys420–Cys447, Cys490–Cys512, Cys501–Cys519, Cys507–Cys542, Cys532–Cys547, Cys570–Cys607, Cys574–Cys612, and Cys585–Cys597. His403 is a binding site for Zn(2+). The active site involves Glu404. Zn(2+) is bound by residues His407 and His413. Residues 495-557 form the Disintegrin domain; sequence GATSRQCKYG…VPFGTWPQSI (63 aa). The TSP type-1 1 domain maps to 558–613; the sequence is DGGWGPWSLWGECSRTCGGGVSSSLRHCDSPAPSGGGKYCLGERKRYRSCNTDPCP. A spacer region spans residues 717–843; the sequence is DAIEGFFNDS…GSGDNEVGFT (127 aa). A glycan (N-linked (GlcNAc...) asparagine) is linked at Asn724. TSP type-1 domains lie at 840-900, 902-960, 962-1007, and 1018-1073; these read VGFT…EPCP, EWFI…QSCP, QWVA…SKPP, and PPPR…SKCD. Disulfide bonds link Cys911–Cys954, Cys915–Cys959, and Cys926–Cys943. Residue Asn956 is glycosylated (N-linked (GlcNAc...) asparagine). The region spanning 1079 to 1117 is the PLAC domain; sequence NTEECKDVNKVAYCPLVLKFKFCSRAYFRQMCCKTCQGH.

Zn(2+) is required as a cofactor. Post-translationally, the precursor is cleaved by a furin endopeptidase. Glycosylated. Can be O-fucosylated by POFUT2 on a serine or a threonine residue found within the consensus sequence C1-X(2)-(S/T)-C2-G of the TSP type-1 repeat domains where C1 and C2 are the first and second cysteine residue of the repeat, respectively. Fucosylated repeats can then be further glycosylated by the addition of a beta-1,3-glucose residue by the glucosyltransferase, B3GALTL. Fucosylation mediates the efficient secretion of ADAMTS family members. Can also be C-glycosylated with one or two mannose molecules on tryptophan residues within the consensus sequence W-X-X-W of the TPRs, and N-glycosylated. These other glycosylations can also facilitate secretion. As to expression, expressed at low levels in placenta and barely detectable in a number of other tissues.

It is found in the secreted. It localises to the extracellular space. The protein resides in the extracellular matrix. This chain is A disintegrin and metalloproteinase with thrombospondin motifs 6 (ADAMTS6), found in Homo sapiens (Human).